The chain runs to 524 residues: Putative ribose/galactose/methyl galactoside import ATP-binding protein 1 (524 aa).

ABC transporter domains lie at 35 to 271 and 281 to 520; these read LEVR…VGRE and VPIG…RIMD. Residue 67–74 coordinates ATP; sequence GENGAGKS.

It belongs to the ABC transporter superfamily. Carbohydrate importer 2 (CUT2) (TC 3.A.1.2) family.

It localises to the cell inner membrane. It carries out the reaction D-ribose(out) + ATP + H2O = D-ribose(in) + ADP + phosphate + H(+). The enzyme catalyses D-galactose(out) + ATP + H2O = D-galactose(in) + ADP + phosphate + H(+). Functionally, part of an ABC transporter complex involved in carbohydrate import. Could be involved in ribose, galactose and/or methyl galactoside import. Responsible for energy coupling to the transport system. In Burkholderia cenocepacia (strain HI2424), this protein is Putative ribose/galactose/methyl galactoside import ATP-binding protein 1.